A 478-amino-acid polypeptide reads, in one-letter code: GDP-fucose protein O-fucosyltransferase 3 (478 aa).

Residues 1–9 (MVRIQRGKL) are Cytoplasmic-facing. A helical; Signal-anchor for type II membrane protein membrane pass occupies residues 10-30 (LAFCLCVMATVFLLITLQVVV). The Lumenal portion of the chain corresponds to 31 to 478 (ELGKFEGKKF…QEFWALVFKD (448 aa)). N-linked (GlcNAc...) asparagine glycans are attached at residues asparagine 110 and asparagine 168. An intrachain disulfide couples cysteine 389 to cysteine 392.

Belongs to the glycosyltransferase 10 family.

Its subcellular location is the endoplasmic reticulum membrane. The enzyme catalyses L-threonyl-[protein] + GDP-beta-L-fucose = 3-O-(alpha-L-fucosyl)-L-threonyl-[protein] + GDP + H(+). The catalysed reaction is L-seryl-[protein] + GDP-beta-L-fucose = 3-O-(alpha-L-fucosyl)-L-seryl-[protein] + GDP + H(+). The protein operates within protein modification; protein glycosylation. In terms of biological role, protein O-fucosyltransferase that specifically catalyzes O-fucosylation of serine or threonine residues in EMI domains of target proteins, such as MMRN1, MMRN2 and EMID1. Attaches fucose through an O-glycosidic linkage. O-fucosylation of EMI domain-containing proteins may be required for facilitating protein folding and secretion. May also show alpha-(1,3)-fucosyltransferase activity toward the innermost N-acetyl glucosamine (GlcNAc) residue in biantennary N-glycan acceptors. However, this was tested with a library of synthetic substrates and this activity is unsure in vivo. May be involved in biosynthesis of Lewis X-carrying biantennary N-glycans that regulate neuron stem cell self-renewal during brain development. This is GDP-fucose protein O-fucosyltransferase 3 (FUT10) from Bos taurus (Bovine).